We begin with the raw amino-acid sequence, 49 residues long: Disintegrin eristostatin (49 aa).

A Disintegrin domain is found at 1–49 (QEEPCATGPCCRRCKFKRAGKVCRVARGDWNDDYCTGKSCDCPKNPWNG). Cystine bridges form between Cys5-Cys14, Cys10-Cys35, Cys11-Cys40, and Cys23-Cys42. Residues 27-29 (RGD) carry the Cell attachment site motif.

The protein belongs to the venom metalloproteinase (M12B) family. P-II subfamily. P-IIa sub-subfamily. Monomer. As to expression, expressed by the venom gland.

The protein localises to the secreted. In terms of biological role, is a potent inhibitor of ADP-induced platelet aggregation. Acts by binding to alpha-IIb/beta-3 (ITGA2B/ITGB3) receptor on the platelet surface. Binds with the same high affinity to resting and activated platelets. Also binds the alpha-4/beta-1 (ITGA4/ITGB1) integrin. Is a potent inhibitor of human and murine melanoma metastases in mouse model systems, also due to the inhibition of binding between the alpha-4/beta-1 integrin and the vascular cell adhesion protein VCAM1. Reacts neither with the integrin alpha-V/beta-3 (ITGAV/ITGB3) vitronectin receptor nor with the integrin alpha-5/beta-1 (ITGA5/ITGB1) fibronectin receptor. Has no effect on cell proliferation or angiogenesis. Specifically inhibits cell migration on fibronectin, but not that on collagen IV or laminin. May involve fibronectin-binding integrins that mediate cell migration. In Eristicophis macmahoni (Leaf-nosed viper), this protein is Disintegrin eristostatin.